The following is a 346-amino-acid chain: Biotin synthase (346 aa).

Positions R38–T256 constitute a Radical SAM core domain. [4Fe-4S] cluster-binding residues include C53, C57, and C60. [2Fe-2S] cluster contacts are provided by C97, C128, C188, and R260.

Belongs to the radical SAM superfamily. Biotin synthase family. As to quaternary structure, homodimer. It depends on [4Fe-4S] cluster as a cofactor. [2Fe-2S] cluster serves as cofactor.

It carries out the reaction (4R,5S)-dethiobiotin + (sulfur carrier)-SH + 2 reduced [2Fe-2S]-[ferredoxin] + 2 S-adenosyl-L-methionine = (sulfur carrier)-H + biotin + 2 5'-deoxyadenosine + 2 L-methionine + 2 oxidized [2Fe-2S]-[ferredoxin]. The protein operates within cofactor biosynthesis; biotin biosynthesis; biotin from 7,8-diaminononanoate: step 2/2. Functionally, catalyzes the conversion of dethiobiotin (DTB) to biotin by the insertion of a sulfur atom into dethiobiotin via a radical-based mechanism. This Escherichia coli O157:H7 protein is Biotin synthase.